The chain runs to 320 residues: Formimidoylglutamase (320 aa).

Residues histidine 125, aspartate 153, histidine 155, aspartate 157, aspartate 244, and aspartate 246 each contribute to the Mn(2+) site.

The protein belongs to the arginase family. The cofactor is Mn(2+).

It carries out the reaction N-formimidoyl-L-glutamate + H2O = formamide + L-glutamate. It participates in amino-acid degradation; L-histidine degradation into L-glutamate; L-glutamate from N-formimidoyl-L-glutamate (hydrolase route): step 1/1. Its function is as follows. Catalyzes the conversion of N-formimidoyl-L-glutamate to L-glutamate and formamide. This chain is Formimidoylglutamase, found in Rhodococcus opacus (strain B4).